Here is a 269-residue protein sequence, read N- to C-terminus: Putative pyruvate, phosphate dikinase regulatory protein (269 aa).

147–154 (GLSRTSKT) serves as a coordination point for ADP.

This sequence belongs to the pyruvate, phosphate/water dikinase regulatory protein family. PDRP subfamily.

The enzyme catalyses N(tele)-phospho-L-histidyl/L-threonyl-[pyruvate, phosphate dikinase] + ADP = N(tele)-phospho-L-histidyl/O-phospho-L-threonyl-[pyruvate, phosphate dikinase] + AMP + H(+). It catalyses the reaction N(tele)-phospho-L-histidyl/O-phospho-L-threonyl-[pyruvate, phosphate dikinase] + phosphate + H(+) = N(tele)-phospho-L-histidyl/L-threonyl-[pyruvate, phosphate dikinase] + diphosphate. In terms of biological role, bifunctional serine/threonine kinase and phosphorylase involved in the regulation of the pyruvate, phosphate dikinase (PPDK) by catalyzing its phosphorylation/dephosphorylation. The chain is Putative pyruvate, phosphate dikinase regulatory protein from Clostridium botulinum (strain ATCC 19397 / Type A).